The primary structure comprises 61 residues: MNAAELRKLSAEQLKDKLAESRKELFDMRFRHATAQLEKTSNLPATKRDIARILTILKEKG.

This sequence belongs to the universal ribosomal protein uL29 family.

The chain is Large ribosomal subunit protein uL29 from Nitratidesulfovibrio vulgaris (strain DSM 19637 / Miyazaki F) (Desulfovibrio vulgaris).